A 256-amino-acid polypeptide reads, in one-letter code: tRNA (guanine-N(7)-)-methyltransferase (256 aa).

The disordered stretch occupies residues methionine 1–aspartate 43. The segment covering glutamine 26–serine 36 has biased composition (basic residues). S-adenosyl-L-methionine is bound by residues glycine 74, glutamate 97–isoleucine 98, asparagine 132–alanine 133, and leucine 152. Aspartate 155 is a catalytic residue. Threonine 230 to glutamate 232 lines the S-adenosyl-L-methionine pocket.

Belongs to the class I-like SAM-binding methyltransferase superfamily. TrmB family.

Its subcellular location is the nucleus. It carries out the reaction guanosine(46) in tRNA + S-adenosyl-L-methionine = N(7)-methylguanosine(46) in tRNA + S-adenosyl-L-homocysteine. The protein operates within tRNA modification; N(7)-methylguanine-tRNA biosynthesis. In terms of biological role, catalyzes the formation of N(7)-methylguanine at position 46 (m7G46) in tRNA. The sequence is that of tRNA (guanine-N(7)-)-methyltransferase from Caenorhabditis briggsae.